The sequence spans 202 residues: MFAIGLTGGIGSGKTTVADLFGARGASLVDTDLIAHRITAPGGLAMPAIEQAFGRGFVAADGSLDRAKMRTLIFSDDAALRRLEAITHPLIRAETDREAREAPGPYVMFVVPLLVESGNWKARSDRVLVVDCPVETQIARVMRRNGFTREQVEAIIAKQATREARLAAADDVIVNDATTPDALAAQVDALHQRYLGFAAAAR.

Residues 3-201 form the DPCK domain; the sequence is AIGLTGGIGS…QRYLGFAAAA (199 aa). 11 to 16 lines the ATP pocket; sequence GSGKTT.

This sequence belongs to the CoaE family.

It is found in the cytoplasm. It carries out the reaction 3'-dephospho-CoA + ATP = ADP + CoA + H(+). It participates in cofactor biosynthesis; coenzyme A biosynthesis; CoA from (R)-pantothenate: step 5/5. Functionally, catalyzes the phosphorylation of the 3'-hydroxyl group of dephosphocoenzyme A to form coenzyme A. The chain is Dephospho-CoA kinase from Burkholderia lata (strain ATCC 17760 / DSM 23089 / LMG 22485 / NCIMB 9086 / R18194 / 383).